The following is a 733-amino-acid chain: DNA-binding protein SATB2 (733 aa).

A disordered region spans residues 1 to 47 (MERRSESPCLRDSPDRRSGSPDVKGPPPVKVARLEQNGSPMGARGRP). Residue Ser20 is modified to Phosphoserine. Residues Lys24 and Lys30 each participate in a glycyl lysine isopeptide (Lys-Gly) (interchain with G-Cter in SUMO2) cross-link. Ser39 is modified (phosphoserine). The CMP domain occupies 57 to 158 (GLMIPVFCVV…VVTLKIQLQS (102 aa)). Lys161 is covalently cross-linked (Glycyl lysine isopeptide (Lys-Gly) (interchain with G-Cter in SUMO2)). A CUTL domain is found at 161 to 234 (KLEDLPAEQW…WYKKYKKIKV (74 aa)). A Glycyl lysine isopeptide (Lys-Gly) (interchain with G-Cter in SUMO) cross-link involves residue Lys233. Residue Lys350 forms a Glycyl lysine isopeptide (Lys-Gly) (interchain with G-Cter in SUMO); alternate linkage. Lys350 is covalently cross-linked (Glycyl lysine isopeptide (Lys-Gly) (interchain with G-Cter in SUMO2); alternate). The segment at residues 350–437 (KPEPTNSSVE…ERDRIYQDER (88 aa)) is a DNA-binding region (CUT 1). The segment at 435–473 (DERERSMNPNVSMVSSASSSPSSSRTPQAKTSTPTTDLP) is disordered. The span at 441 to 458 (MNPNVSMVSSASSSPSSS) shows a compositional bias: low complexity. Ser454 carries the phosphoserine modification. A compositionally biased stretch (polar residues) spans 459 to 470 (RTPQAKTSTPTT). Thr467 carries the phosphothreonine modification. Positions 473-560 (PIKVDGANIN…ERDVIYEEES (88 aa)) form a DNA-binding region, CUT 2. Lys475 is covalently cross-linked (Glycyl lysine isopeptide (Lys-Gly) (interchain with G-Cter in SUMO2)). Low complexity predominate over residues 580–593 (QVLHRQQSQPAKES). Disordered stretches follow at residues 580-617 (QVLH…KPRS) and 694-733 (LLTE…IDQR). Position 594 is a phosphoserine (Ser594). The homeobox DNA-binding region spans 615–674 (PRSRTKISLEALGILQSFIHDVGLYPDQEAIHTLSAQLDLPKHTIIKFFQNQRYHVKHHG). Residues 694-708 (LLTESEENDSEEGSE) are compositionally biased toward acidic residues. Over residues 709-733 (EMYKVEAEEENADKSKAAPAEIDQR) the composition is skewed to basic and acidic residues. Lys724 participates in a covalent cross-link: Glycyl lysine isopeptide (Lys-Gly) (interchain with G-Cter in SUMO2).

Belongs to the CUT homeobox family. Interacts with ATF4 and RUNX2; resulting in enhanced DNA binding and transactivation by these transcription factors. Interacts with PIAS1. Post-translationally, sumoylated by PIAS1. Sumoylation promotes nuclear localization, but represses transcription factor activity. In terms of tissue distribution, high expression in adult brain, moderate expression in fetal brain, and weak expression in adult liver, kidney, and spinal cord and in select brain regions, including amygdala, corpus callosum, caudate nucleus, and hippocampus.

Its subcellular location is the nucleus matrix. Binds to DNA, at nuclear matrix- or scaffold-associated regions. Thought to recognize the sugar-phosphate structure of double-stranded DNA. Transcription factor controlling nuclear gene expression, by binding to matrix attachment regions (MARs) of DNA and inducing a local chromatin-loop remodeling. Acts as a docking site for several chromatin remodeling enzymes and also by recruiting corepressors (HDACs) or coactivators (HATs) directly to promoters and enhancers. Required for the initiation of the upper-layer neurons (UL1) specific genetic program and for the inactivation of deep-layer neurons (DL) and UL2 specific genes, probably by modulating BCL11B expression. Repressor of Ctip2 and regulatory determinant of corticocortical connections in the developing cerebral cortex. May play an important role in palate formation. Acts as a molecular node in a transcriptional network regulating skeletal development and osteoblast differentiation. This chain is DNA-binding protein SATB2 (SATB2), found in Homo sapiens (Human).